Consider the following 192-residue polypeptide: 3-hydroxyanthranilate 3,4-dioxygenase 1 (192 aa).

O2 is bound at residue R50. Positions 54, 60, and 102 each coordinate Fe cation. Substrate is bound at residue E60. Residues R106 and E116 each coordinate substrate. The a divalent metal cation site is built by C131, C134, C168, and C171.

This sequence belongs to the 3-HAO family. Fe(2+) is required as a cofactor.

The protein resides in the cytoplasm. It carries out the reaction 3-hydroxyanthranilate + O2 = (2Z,4Z)-2-amino-3-carboxymuconate 6-semialdehyde. It participates in cofactor biosynthesis; NAD(+) biosynthesis; quinolinate from L-kynurenine: step 3/3. In terms of biological role, catalyzes the oxidative ring opening of 3-hydroxyanthranilate to 2-amino-3-carboxymuconate semialdehyde, which spontaneously cyclizes to quinolinate. The polypeptide is 3-hydroxyanthranilate 3,4-dioxygenase 1 (bna1-1) (Aspergillus oryzae (strain ATCC 42149 / RIB 40) (Yellow koji mold)).